A 357-amino-acid chain; its full sequence is MAEITAAMVKELRESTGAGMMDCKNALSETNGDFDKAVQLLREKGLGKAAKKADRLAAEGLVSVKVSDDFTSATVSEINSETDFVAKNDQFIALTKDTTAHIQNNSLQSVEELHSSTINGVKFEEYLKSQIATIGENLVVRRFATLKAGANGVVNGYIHTNGRVGVVIAAACDSAEVASKSRDLLRQICMHIAAMRPSYLSYEDLDMTFVENEYKALVAELEKENEERRRLKDPNKPEHKIPQFASRKQLSDAILKEAEEKIKEELKTQGKPEKIWDNIIPGKMNSFIADNSQLDSKFTLMGQFYVMDDKKTVEQVIAEKEKEFGGKIKIVEFICFEVGEGLEKKTEDFAAEVAAQL.

The segment at 82 to 85 (TDFV) is involved in Mg(2+) ion dislocation from EF-Tu.

It belongs to the EF-Ts family.

It is found in the cytoplasm. Functionally, associates with the EF-Tu.GDP complex and induces the exchange of GDP to GTP. It remains bound to the aminoacyl-tRNA.EF-Tu.GTP complex up to the GTP hydrolysis stage on the ribosome. This Campylobacter jejuni subsp. doylei (strain ATCC BAA-1458 / RM4099 / 269.97) protein is Elongation factor Ts.